The primary structure comprises 180 residues: 3-hydroxyanthranilate 3,4-dioxygenase (180 aa).

An O2-binding site is contributed by R46. Fe cation-binding residues include H50, E56, and H94. E56 contributes to the substrate binding site. The substrate site is built by R98 and E109. C124, C127, C161, and C164 together coordinate Fe cation.

It belongs to the 3-HAO family. As to quaternary structure, homodimer. It depends on Fe(2+) as a cofactor.

The catalysed reaction is 3-hydroxyanthranilate + O2 = (2Z,4Z)-2-amino-3-carboxymuconate 6-semialdehyde. The protein operates within cofactor biosynthesis; NAD(+) biosynthesis; quinolinate from L-kynurenine: step 3/3. Catalyzes the oxidative ring opening of 3-hydroxyanthranilate to 2-amino-3-carboxymuconate semialdehyde, which spontaneously cyclizes to quinolinate. This Ruegeria pomeroyi (strain ATCC 700808 / DSM 15171 / DSS-3) (Silicibacter pomeroyi) protein is 3-hydroxyanthranilate 3,4-dioxygenase.